The following is a 730-amino-acid chain: Pentatricopeptide repeat-containing protein At5g64320, mitochondrial (730 aa).

The N-terminal 18 residues, 1-18 (MVMLARSKLALDVSRRSQ), are a transit peptide targeting the mitochondrion. PPR repeat units follow at residues 110–144 (SFDV…GIVF), 145–175 (KESL…MRNV), 181–215 (TFKS…KIPP), 216–250 (TLFT…GCVP), 251–285 (NSVI…GCVP), 286–320 (DAET…GFAP), 321–351 (DDIT…IPKP), 352–387 (EIVI…GIVP), 388–422 (DVCT…GCKP), 423–457 (NVYS…GLKP), 458–492 (NTVG…GCKP), 493–527 (DVYT…GVVA), 528–562 (NTVT…GSPL), 563–597 (DEIT…GHAP), 598–632 (SNIS…GSTP), 633–667 (DIVT…GIPP), and 668–702 (DTVT…GFVP).

It belongs to the PPR family. P subfamily.

The protein resides in the mitochondrion. The polypeptide is Pentatricopeptide repeat-containing protein At5g64320, mitochondrial (Arabidopsis thaliana (Mouse-ear cress)).